The following is a 658-amino-acid chain: UvrABC system protein B (658 aa).

The region spanning 25 to 414 (KSLKNNNHYQ…LSKKNVAEQI (390 aa)) is the Helicase ATP-binding domain. ATP is bound at residue 38–45 (GVTGSGKT). A Beta-hairpin motif is present at residues 91–114 (HFDYYQPESYIPRRDLFIEKDSSI). Positions 433 to 607 (QVQDLFDEIK…ELKLRDDEIR (175 aa)) constitute a Helicase C-terminal domain. The UVR domain maps to 623–658 (EKIIKELDKKMRECTKNLDFEEAMRLRDEIAQLRTL).

This sequence belongs to the UvrB family. Forms a heterotetramer with UvrA during the search for lesions. Interacts with UvrC in an incision complex.

It localises to the cytoplasm. The UvrABC repair system catalyzes the recognition and processing of DNA lesions. A damage recognition complex composed of 2 UvrA and 2 UvrB subunits scans DNA for abnormalities. Upon binding of the UvrA(2)B(2) complex to a putative damaged site, the DNA wraps around one UvrB monomer. DNA wrap is dependent on ATP binding by UvrB and probably causes local melting of the DNA helix, facilitating insertion of UvrB beta-hairpin between the DNA strands. Then UvrB probes one DNA strand for the presence of a lesion. If a lesion is found the UvrA subunits dissociate and the UvrB-DNA preincision complex is formed. This complex is subsequently bound by UvrC and the second UvrB is released. If no lesion is found, the DNA wraps around the other UvrB subunit that will check the other stand for damage. This Helicobacter pylori (strain ATCC 700392 / 26695) (Campylobacter pylori) protein is UvrABC system protein B.